The chain runs to 266 residues: UPF0354 protein lin1649 (266 aa).

Belongs to the UPF0354 family.

The protein is UPF0354 protein lin1649 of Listeria innocua serovar 6a (strain ATCC BAA-680 / CLIP 11262).